The chain runs to 487 residues: ATP synthase subunit beta (487 aa).

Residue 164–171 coordinates ATP; that stretch reads GGAGVGKT.

This sequence belongs to the ATPase alpha/beta chains family. F-type ATPases have 2 components, CF(1) - the catalytic core - and CF(0) - the membrane proton channel. CF(1) has five subunits: alpha(3), beta(3), gamma(1), delta(1), epsilon(1). CF(0) has four main subunits: a(1), b(1), b'(1) and c(9-12).

The protein localises to the cellular thylakoid membrane. The catalysed reaction is ATP + H2O + 4 H(+)(in) = ADP + phosphate + 5 H(+)(out). In terms of biological role, produces ATP from ADP in the presence of a proton gradient across the membrane. The catalytic sites are hosted primarily by the beta subunits. The polypeptide is ATP synthase subunit beta (Synechococcus sp. (strain WH7803)).